A 469-amino-acid chain; its full sequence is 3-isopropylmalate dehydratase large subunit 1 (469 aa).

[4Fe-4S] cluster is bound by residues Cys344, Cys404, and Cys407.

It belongs to the aconitase/IPM isomerase family. LeuC type 1 subfamily. As to quaternary structure, heterodimer of LeuC and LeuD. [4Fe-4S] cluster serves as cofactor.

It catalyses the reaction (2R,3S)-3-isopropylmalate = (2S)-2-isopropylmalate. The protein operates within amino-acid biosynthesis; L-leucine biosynthesis; L-leucine from 3-methyl-2-oxobutanoate: step 2/4. Functionally, catalyzes the isomerization between 2-isopropylmalate and 3-isopropylmalate, via the formation of 2-isopropylmaleate. The sequence is that of 3-isopropylmalate dehydratase large subunit 1 from Rubrobacter xylanophilus (strain DSM 9941 / JCM 11954 / NBRC 16129 / PRD-1).